A 694-amino-acid chain; its full sequence is MATLAYSIEVEGLEDETLVVRGFHGQESLSNSVFLGQACYGFRYQMQLASRVSNLTADQMVDKRAELKLYRNSQLVQRVHGIVRAFSQGDIGHHHTFYQLTLVPALERLSLRHNSRIFQKQTVPEILSILLQEMGIHDYAFALKRDCVQREFCVQYRESDIDFLHRLAAEEGLVYSFVHEAGKHTLYFSDASDSLSKLPEPIPYNALAGGTMDTPYIHGLTYRTQAEVSEVQLKDYSFKKPAYSFLQTVQGTELDYQQTRYQHFDAPGRYKDDVNGAAFSQIRLDYLRRHAHTATGQSNEPLLRAGYKFDLQEHLDPAMNRDWVVVSINHQGEQPQALQEEGGSGATTYNNQFSLIPGHLHWRAEPQPKPQVDGPMIATVVGPEGEEIFCDEHGRVKIHFPWDRYSNGNEQSSCWVRVSQGWAGSQYGFIAIPRIGHEVIVSFLNGDPDQPIITGRTYHATNTPPYTLPEHKTKTVLRTETHQGEGFNELSFEDQAGKEQIYLHAQKDFDGLIENDHTTVIRHDQHLTVENDQFTQIKHNQHLTVEGESRTLVKLDCSSEIGGSLQQKIGSKAIYDAGTEVHLKAGNKLVLEAGNELTIKAGGSFIKVDAGGVHVVGSAINLNSGGSAGSGSGYGGKMAELPQGVDKAKTPQEIELAAVTPTQQSMSPLLKARQIEALKGPAPVCEVCEEAKGN.

It belongs to the VgrG protein family.

It is found in the secreted. Its function is as follows. Part of the type VI secretion system specialized secretion system, which delivers several virulence factors in both prokaryotic and eukaryotic cells during infection. Forms the spike at the tip of the elongating tube formed by haemolysin co-regulated protein Hcp. Allows the delivery of the VasX antibacterial toxin to target cells where it exerts its toxicity. In Vibrio cholerae serotype O1 (strain ATCC 39315 / El Tor Inaba N16961), this protein is Type VI secretion system spike protein VgrG2 (vgrG2).